Here is a 129-residue protein sequence, read N- to C-terminus: Small ribosomal subunit protein uS11 (129 aa).

As to quaternary structure, part of the 30S ribosomal subunit. Interacts with proteins S7 and S18. Binds to IF-3. May be methylated on an undetermined residue.

Located on the platform of the 30S subunit, it bridges several disparate RNA helices of the 16S rRNA. Forms part of the Shine-Dalgarno cleft in the 70S ribosome. The chain is Small ribosomal subunit protein uS11 from Rhodopseudomonas palustris (strain ATCC BAA-98 / CGA009).